Reading from the N-terminus, the 807-residue chain is Lysyl oxidase homolog 3B (807 aa).

An N-terminal signal peptide occupies residues 1–24; it reads MELHQWCRHIIVFLLNVWIPSCFA. SRCR domains follow at residues 49–150, 175–288, 309–409, 419–470, and 476–579; these read FRLS…VICK, VRLR…VSCV, TRLK…VRCN, VRIL…LGYA, and VRLS…VICS. 9 disulfide bridges follow: C75–C139, C88–C149, C119–C129, C207–C277, C220–C287, C254–C264, C334–C398, C347–C408, and C378–C388. Residue N272 is glycosylated (N-linked (GlcNAc...) asparagine). N392 carries an N-linked (GlcNAc...) asparagine glycan. 2 cysteine pairs are disulfide-bonded: C514–C578 and C547–C557. An N-linked (GlcNAc...) asparagine glycan is attached at N536. N679 carries N-linked (GlcNAc...) asparagine glycosylation. The lysine tyrosylquinone (Lys-Tyr) cross-link spans 688-724; the sequence is KASFCLEDTDCDEGVSKRYKCANFGEQGITVGCWDLY. Y724 carries the post-translational modification 2',4',5'-topaquinone.

It belongs to the lysyl oxidase family. Cu cation is required as a cofactor. The cofactor is lysine tyrosylquinone residue. In terms of processing, the lysine tyrosylquinone cross-link (LTQ) is generated by condensation of the epsilon-amino group of a lysine with a topaquinone produced by oxidation of tyrosine.

The protein localises to the secreted. It localises to the extracellular space. Its subcellular location is the cytoplasm. It is found in the nucleus. It catalyses the reaction L-lysyl-[protein] + O2 + H2O = (S)-2-amino-6-oxohexanoyl-[protein] + H2O2 + NH4(+). The catalysed reaction is N(6)-acetyl-L-lysyl-[protein] + O2 + H2O = acetamide + (S)-2-amino-6-oxohexanoyl-[protein] + H2O2. In terms of biological role, protein-lysine 6-oxidase that mediates the oxidation of peptidyl lysine residues to allysine in target proteins. Catalyzes the post-translational oxidative deamination of peptidyl lysine residues in precursors of elastin and different types of collagens, a prerequisite in the formation of cross-links between collagens and elastin. Can mediate oxidation of lysine residues that are acetylated. Also able to catalyze deacetylation of lysine residues. Required for maturation of neural crest derived cartilage elements. The chain is Lysyl oxidase homolog 3B from Danio rerio (Zebrafish).